Reading from the N-terminus, the 756-residue chain is LIM domain and actin-binding protein 1 (756 aa).

M1 carries the N-acetylmethionine modification. S15 and S55 each carry phosphoserine. A compositionally biased stretch (basic and acidic residues) spans 44–56 (AAEEANMEKRRSN). 2 disordered regions span residues 44–183 (AAEE…SNKI) and 204–377 (QTKI…AVKK). Over residues 107–118 (EVASSSASGVEA) the composition is skewed to low complexity. A Phosphoserine modification is found at S130. Residues 140–173 (RIKDTEHLKDHSAESKKMENCLAESRHEVGKPET) show a composition bias toward basic and acidic residues. A Required for interaction with NPC1L1 motif is present at residues 164-166 (SRH). S221 is subject to Phosphoserine. At Y225 the chain carries Phosphotyrosine. 2 positions are modified to phosphoserine: S226 and S238. Positions 245 to 254 (EKSESRRNLE) are enriched in basic and acidic residues. Residue S259 is modified to Phosphoserine. Residues 274–287 (VSKQSSSTNYTNEL) are compositionally biased toward polar residues. A compositionally biased stretch (basic and acidic residues) spans 294–303 (IKTHKLEQKE). Phosphoserine is present on residues S339, S346, S358, S365, and S370. Positions 384–444 (ETCVECQKTV…KPHFNQLFKS (61 aa)) constitute an LIM zinc-binding domain. N6-succinyllysine is present on K435. S486 bears the Phosphoserine mark. A required for interaction with MYO5B region spans residues 489-509 (VEDAPIAKVGVLTASMEAKAS). Residues 508-726 (ASSQLEKEDK…TTQKQKSQDV (219 aa)) are disordered. The span at 512 to 523 (LEKEDKPAETKK) shows a compositional bias: basic and acidic residues. Over residues 533–542 (ELSSSGSALE) the composition is skewed to low complexity. Positions 552–563 (WPPEDEVSKPEA) are enriched in basic and acidic residues. Residues S597, S600, S605, and S613 each carry the phosphoserine modification. Positions 627-637 (AERKQMEKASA) are enriched in basic and acidic residues. The segment covering 638–651 (SEKNGSVGKTTWPS) has biased composition (polar residues). The span at 652–667 (KESRGGEAAGRSKEVQ) shows a compositional bias: basic and acidic residues. A compositionally biased stretch (polar residues) spans 691 to 721 (LQQQSPLEPKSKNWSSFADNTSAKEFTTQKQ). Residues S695, S723, and S738 each carry the phosphoserine modification.

In terms of assembly, interacts with NPC1L1; bridges NPC1L1 with MYO5B. Interacts with MYO5B; bridges MYO5B with NPC1L1. Interacts with PXN; this complex stabilizes actin dynamics. Interacts with F-actin and G-actin. Interacts with LUZP1 (via C-terminus); both proteins restrict ciliation and may work together to regulate this process. Binds RAB40B (GTP-bound); interaction influences LIMA1 subcellular localization in lamellipodia during cell migration. In terms of processing, phosphorylation of the C-terminal region by MAPK1/MAPK3 reduces its association with F-actin and contributes to actin filament reorganization and enhances cell motility. Ubiquitinated by the ECS(RAB40B) complex leading to its degradation. In terms of tissue distribution, widely expressed. Highest levels of isoform 2 are expressed in lung, spleen and small intestine. Isoform 2 is expressed at higher levels than isoform 1 in most tissues except liver, fat and kidney. Isoform 1 and isoform 2 are expressed at low levels in skeletal muscle, heart, stomach and lymph.

The protein localises to the cytoplasm. It is found in the cell junction. Its subcellular location is the focal adhesion. The protein resides in the cytoskeleton. It localises to the stress fiber. The protein localises to the cell membrane. It is found in the cell projection. Its subcellular location is the ruffle. The protein resides in the lamellipodium. Actin-binding protein involved in actin cytoskeleton regulation and dynamics. Increases the number and size of actin stress fibers and inhibits membrane ruffling. Inhibits actin filament depolymerization. Bundles actin filaments, delays filament nucleation and reduces formation of branched filaments. Acts as a negative regulator of primary cilium formation. Plays a role in cholesterol homeostasis. Influences plasma cholesterol levels through regulation of intestinal cholesterol absorption. May act as a scaffold protein by regulating NPC1L1 transportation, an essential protein for cholesterol absorption, to the plasma membrane by recruiting MYO5B to NPC1L1, and thus facilitates cholesterol uptake. In Sus scrofa (Pig), this protein is LIM domain and actin-binding protein 1.